Consider the following 161-residue polypeptide: uncharacterized protein (161 aa).

This is an uncharacterized protein from Haemophilus influenzae (strain ATCC 51907 / DSM 11121 / KW20 / Rd).